The chain runs to 374 residues: Putative zinc finger MYND domain-containing protein R331 (374 aa).

The Zn(2+) site is built by C328, C331, C341, C344, C350, C354, H362, and C366. The MYND-type zinc-finger motif lies at 328–366 (CFYCNKNIEKPVVCNKCFRIKYCSEKCQSEYNSYHSDDC).

The sequence is that of Putative zinc finger MYND domain-containing protein R331 from Acanthamoeba polyphaga (Amoeba).